Consider the following 453-residue polypeptide: ATP-dependent protease ATPase subunit HslU (453 aa).

ATP is bound by residues I18, 60–65 (GVGKTE), D266, E331, and R403.

This sequence belongs to the ClpX chaperone family. HslU subfamily. A double ring-shaped homohexamer of HslV is capped on each side by a ring-shaped HslU homohexamer. The assembly of the HslU/HslV complex is dependent on binding of ATP.

The protein resides in the cytoplasm. Functionally, ATPase subunit of a proteasome-like degradation complex; this subunit has chaperone activity. The binding of ATP and its subsequent hydrolysis by HslU are essential for unfolding of protein substrates subsequently hydrolyzed by HslV. HslU recognizes the N-terminal part of its protein substrates and unfolds these before they are guided to HslV for hydrolysis. This Desulforapulum autotrophicum (strain ATCC 43914 / DSM 3382 / VKM B-1955 / HRM2) (Desulfobacterium autotrophicum) protein is ATP-dependent protease ATPase subunit HslU.